Consider the following 336-residue polypeptide: Shematrin-like protein 1 (336 aa).

A signal peptide spans 1–16 (MLRFIAIVALIATVNA).

As to expression, prismatic layer of shell (at protein level). Expressed primarily in the mantle with highest level in the mantle edge and lower level in the mantle pallium.

Its subcellular location is the secreted. In Pinctada maxima (Silver-lipped pearl oyster), this protein is Shematrin-like protein 1.